A 73-amino-acid polypeptide reads, in one-letter code: U-scoloptoxin(15)-Sm2a (73 aa).

A signal peptide spans 1–20 (MKFYIVFCLFVVLLINFAAA). Cystine bridges form between Cys39-Cys66 and Cys43-Cys68.

The protein belongs to the scoloptoxin-15 family. Expressed by the venom gland.

Its subcellular location is the secreted. Activity unknown, even that a lot of targets (Kv, Nav, Cav) have been tested and activities on insects and mice have been tested. This is U-scoloptoxin(15)-Sm2a from Scolopendra morsitans (Tanzanian blue ringleg centipede).